The following is a 102-amino-acid chain: Small ribosomal subunit protein bS20 (102 aa).

Belongs to the bacterial ribosomal protein bS20 family.

Functionally, binds directly to 16S ribosomal RNA. This is Small ribosomal subunit protein bS20 from Gloeobacter violaceus (strain ATCC 29082 / PCC 7421).